The sequence spans 120 residues: NAD(P)H-quinone oxidoreductase subunit 3 (120 aa).

3 consecutive transmembrane segments (helical) span residues Leu-10 to Leu-30, Met-64 to Val-84, and Leu-89 to Val-109.

This sequence belongs to the complex I subunit 3 family. NDH-1 can be composed of about 15 different subunits; different subcomplexes with different compositions have been identified which probably have different functions.

It localises to the cellular thylakoid membrane. The catalysed reaction is a plastoquinone + NADH + (n+1) H(+)(in) = a plastoquinol + NAD(+) + n H(+)(out). It catalyses the reaction a plastoquinone + NADPH + (n+1) H(+)(in) = a plastoquinol + NADP(+) + n H(+)(out). In terms of biological role, NDH-1 shuttles electrons from an unknown electron donor, via FMN and iron-sulfur (Fe-S) centers, to quinones in the respiratory and/or the photosynthetic chain. The immediate electron acceptor for the enzyme in this species is believed to be plastoquinone. Couples the redox reaction to proton translocation, and thus conserves the redox energy in a proton gradient. Cyanobacterial NDH-1 also plays a role in inorganic carbon-concentration. This Synechococcus sp. (strain JA-3-3Ab) (Cyanobacteria bacterium Yellowstone A-Prime) protein is NAD(P)H-quinone oxidoreductase subunit 3.